A 320-amino-acid polypeptide reads, in one-letter code: uncharacterized protein (320 aa).

Residues 22–86 (KTIGRSSSFD…IRDLNNKTGT (65 aa)) enclose the FHA domain. The tract at residues 242-264 (TDTDTTEEKEEEEEKEEGDDEEG) is disordered.

This is an uncharacterized protein from Saccharomyces cerevisiae (strain ATCC 204508 / S288c) (Baker's yeast).